The sequence spans 419 residues: Glycine, glutamate and proline-rich protein (419 aa).

A signal peptide spans 1–16 (MKCLVALFLSLSLVAC). The disordered stretch occupies residues 74-152 (VERESEEAEG…VDMCAGESRR (79 aa)). The span at 76–85 (RESEEAEGEG) shows a compositional bias: acidic residues. Positions 86–130 (TDGRGGGEGEREGWGGEREGGEGEREGGEGEREGREGEREGKSSE) are enriched in basic and acidic residues.

In the C-terminal section; belongs to the glycosyl hydrolase 23 family. Component of the acid-insoluble organic matrix of calcified layers of the shell (at protein level).

It is found in the secreted. This is Glycine, glutamate and proline-rich protein from Lottia gigantea (Giant owl limpet).